We begin with the raw amino-acid sequence, 284 residues long: MMADEKKTPENEAETATPAVAVEDALKAEPTETLEAQKAKAEAETPAVAETPSEAAANQSAAQGAEGQPRERGGHDRGGRGGRGGNDRGRGRGGRDNRRGGRREEEDDGIIEKLVHINRVSKTVKGGKRFGFAALVVVGDGQGRVGFGKGKAREVPEAIQKATAAARKKMIRVALKEGRTLHHDGNGRFGAGKVTVRTAPPGTGIIAGGPMRAVFESLGVADVVTKSVGTSNPYNMIRATFDALQDQTSPKSVAQRRGKKVADLLGRGGASEAEAEADAAAIAE.

The segment covering 1–10 (MMADEKKTPE) has biased composition (basic and acidic residues). The segment at 1–105 (MMADEKKTPE…DNRRGGRREE (105 aa)) is disordered. Residues 14-23 (ETATPAVAVE) show a composition bias toward low complexity. Positions 24 to 43 (DALKAEPTETLEAQKAKAEA) are enriched in basic and acidic residues. The segment covering 44-67 (ETPAVAETPSEAAANQSAAQGAEG) has biased composition (low complexity). A compositionally biased stretch (basic and acidic residues) spans 68–105 (QPRERGGHDRGGRGGRGGNDRGRGRGGRDNRRGGRREE). The region spanning 110–173 (IIEKLVHINR…AAARKKMIRV (64 aa)) is the S5 DRBM domain. The tract at residues 246–284 (DQTSPKSVAQRRGKKVADLLGRGGASEAEAEADAAAIAE) is disordered.

It belongs to the universal ribosomal protein uS5 family. Part of the 30S ribosomal subunit. Contacts proteins S4 and S8.

In terms of biological role, with S4 and S12 plays an important role in translational accuracy. Located at the back of the 30S subunit body where it stabilizes the conformation of the head with respect to the body. The sequence is that of Small ribosomal subunit protein uS5 from Erythrobacter litoralis (strain HTCC2594).